Here is a 3848-residue protein sequence, read N- to C-terminus: Intermembrane lipid transfer protein tipC (3848 aa).

The Chorein N-terminal domain occupies 4 to 112 (HIAASVLTKY…KFQDEKQAKL (109 aa)). Disordered stretches follow at residues 243–268 (IKKE…DEIE), 450–481 (LKLQ…TGGG), 966–985 (QQLQ…SPPL), 1174–1219 (KNNQ…NNNS), 1326–1345 (ERKL…GVST), 1907–1926 (ENIN…TTTT), 2024–2047 (DDYN…NQLP), 2209–2290 (IKPA…NKNL), 2330–2353 (FNPK…SPLL), 2509–2541 (KQLN…NLLG), 3209–3228 (GITN…NNND), and 3310–3342 (INQQ…NTTQ). 2 stretches are compositionally biased toward low complexity: residues 251-260 (QQQQQQQQQG) and 452-477 (LQQQ…PSTS). The span at 1175 to 1190 (NNQNNNQNNNQNNNQN) shows a compositional bias: low complexity. Polar residues predominate over residues 1191-1200 (INESSPTVFI). Pro residues predominate over residues 1202–1211 (SPPPPPPPPL). Residues 1333-1345 (TSPTTPSSSGVST) are compositionally biased toward low complexity. 3 stretches are compositionally biased toward low complexity: residues 2029 to 2044 (DNYN…NSNN), 2217 to 2289 (NNNN…NNKN), and 2335 to 2353 (SSSS…SPLL). Composition is skewed to low complexity over residues 3212–3228 (NDPN…NNND) and 3311–3342 (NQQP…NTTQ).

It belongs to the VPS13 family.

It is found in the membrane. Mediates the transfer of lipids between membranes at organelle contact sites. In Dictyostelium discoideum (Social amoeba), this protein is Intermembrane lipid transfer protein tipC (tipC).